The chain runs to 210 residues: Outer-membrane lipoprotein LolB (210 aa).

The first 26 residues, 1–26 (MSKLKIDTKRRFSLLIALVLIISLSS), serve as a signal peptide directing secretion. Cys27 carries the N-palmitoyl cysteine lipid modification. Cys27 is lipidated: S-diacylglycerol cysteine.

It belongs to the LolB family. As to quaternary structure, monomer.

The protein resides in the cell outer membrane. Its function is as follows. Plays a critical role in the incorporation of lipoproteins in the outer membrane after they are released by the LolA protein. The protein is Outer-membrane lipoprotein LolB of Francisella tularensis subsp. holarctica (strain FTNF002-00 / FTA).